The chain runs to 338 residues: (2Z,6E)-hedycaryol synthase (338 aa).

2 residues coordinate Mg(2+): D82 and E87. The short motif at 82-87 (DDQIDE) is the DDXXXE motif element. R175 contributes to the substrate binding site. Residues N221 and S225 each contribute to the Mg(2+) site. The NXXXSXXXE motif motif lies at 221–229 (NDVFSVERE). A substrate-binding site is contributed by R228. E229 contacts Mg(2+).

It belongs to the terpene synthase family. Homodimer. It depends on Mg(2+) as a cofactor.

The enzyme catalyses (2E,6E)-farnesyl diphosphate + H2O = (2Z,6E)-hedycaryol + diphosphate. Its pathway is secondary metabolite biosynthesis; terpenoid biosynthesis. Its function is as follows. Catalyzes the conversion of (2E,6E)-farnesyl diphosphate (FPP) into (2Z,6E)-hedycaryol via a 1,11-cyclization. The chain is (2Z,6E)-hedycaryol synthase from Kitasatospora setae (strain ATCC 33774 / DSM 43861 / JCM 3304 / KCC A-0304 / NBRC 14216 / KM-6054) (Streptomyces setae).